The following is a 155-amino-acid chain: Ribosomal RNA large subunit methyltransferase H (155 aa).

Residues Leu72, Gly103, and 122–127 contribute to the S-adenosyl-L-methionine site; that span reads FGRMVW.

This sequence belongs to the RNA methyltransferase RlmH family. Homodimer.

The protein resides in the cytoplasm. It catalyses the reaction pseudouridine(1915) in 23S rRNA + S-adenosyl-L-methionine = N(3)-methylpseudouridine(1915) in 23S rRNA + S-adenosyl-L-homocysteine + H(+). Functionally, specifically methylates the pseudouridine at position 1915 (m3Psi1915) in 23S rRNA. The sequence is that of Ribosomal RNA large subunit methyltransferase H from Cereibacter sphaeroides (strain ATCC 17023 / DSM 158 / JCM 6121 / CCUG 31486 / LMG 2827 / NBRC 12203 / NCIMB 8253 / ATH 2.4.1.) (Rhodobacter sphaeroides).